Here is a 599-residue protein sequence, read N- to C-terminus: MTDLTAQELAQPSWQTRDHQDDPVIGELRNRFGPDAFTVQATRTGVPVVWVKREQLLEIVEFLRKLPKPYVMLYDLHGMDERLRTHRAGLPAADFSVFYHFISIERNRDIMLKVALSENDLHVPTLTKIFPNANWYERETWEMFGIDVVGHPHLTRIMMPQTWEGHPLRKDYPARATEFDPFELTKQKEDLEMESLTFKPEDWGMKRSTANEDFMFLNLGPNHPSAHGAFRIILQLDGEEIVDCVPDIGYHHRGAEKMGERQSWHSYIPYTDRIEYLGGCVNEMPYVLAVEKLAGIKVPERVEVIRVMLSELFRINSHLLYISTFIQDVGAMSPVFFAFTDRQKIYDVVEAITGFRMHPAWFRIGGVAHDLPKGWERLLREFLDWMPKRLKAYEQTALKNSVLIGRAKGVSAYNMEEALAWGTTGAGLRATGLDFDVRKWRPYSGYENFDFEIPIGDGVSCAYSRVMLKMEEMRQSMRILEQCLNNMPAGPFKADHPLTTPPPKERTLQHIETLITHFLQVSWGPVMPANESFQMIEATKGINSYYLTSDGSTMSYRTRVRTPSFPHLQQIPSVINGSLVSDLIVYLGSIDFVMSDVDR.

The segment covering 1 to 15 has biased composition (polar residues); that stretch reads MTDLTAQELAQPSWQ. The disordered stretch occupies residues 1–21; sequence MTDLTAQELAQPSWQTRDHQD. Residues 1–189 are NADH dehydrogenase I subunit C; sequence MTDLTAQELA…DPFELTKQKE (189 aa). Positions 213–599 are NADH dehydrogenase I subunit D; sequence DFMFLNLGPN…IDFVMSDVDR (387 aa).

The protein in the N-terminal section; belongs to the complex I 30 kDa subunit family. This sequence in the C-terminal section; belongs to the complex I 49 kDa subunit family. In terms of assembly, NDH-1 is composed of 13 different subunits. Subunits NuoB, CD, E, F, and G constitute the peripheral sector of the complex.

Its subcellular location is the cell inner membrane. It catalyses the reaction a quinone + NADH + 5 H(+)(in) = a quinol + NAD(+) + 4 H(+)(out). NDH-1 shuttles electrons from NADH, via FMN and iron-sulfur (Fe-S) centers, to quinones in the respiratory chain. The immediate electron acceptor for the enzyme in this species is believed to be ubiquinone. Couples the redox reaction to proton translocation (for every two electrons transferred, four hydrogen ions are translocated across the cytoplasmic membrane), and thus conserves the redox energy in a proton gradient. The polypeptide is NADH-quinone oxidoreductase subunit C/D (Erwinia tasmaniensis (strain DSM 17950 / CFBP 7177 / CIP 109463 / NCPPB 4357 / Et1/99)).